The sequence spans 110 residues: Large ribosomal subunit protein uL22 (110 aa).

Belongs to the universal ribosomal protein uL22 family. As to quaternary structure, part of the 50S ribosomal subunit.

Its function is as follows. This protein binds specifically to 23S rRNA; its binding is stimulated by other ribosomal proteins, e.g. L4, L17, and L20. It is important during the early stages of 50S assembly. It makes multiple contacts with different domains of the 23S rRNA in the assembled 50S subunit and ribosome. Functionally, the globular domain of the protein is located near the polypeptide exit tunnel on the outside of the subunit, while an extended beta-hairpin is found that lines the wall of the exit tunnel in the center of the 70S ribosome. This is Large ribosomal subunit protein uL22 from Pasteurella multocida (strain Pm70).